Here is a 224-residue protein sequence, read N- to C-terminus: Protein LURP-one-related 1 (224 aa).

Residues 1–23 are disordered; sequence MQQPYEYRYPQGTGPSAPPPPPK.

It belongs to the LOR family.

Might be related to the phospholipid scramblase and tubby-like superfamily of membrane tethered transcription factors. The polypeptide is Protein LURP-one-related 1 (Arabidopsis thaliana (Mouse-ear cress)).